Reading from the N-terminus, the 484-residue chain is Calcium-dependent protein kinase 31 (484 aa).

Residue G2 is the site of N-myristoyl glycine attachment. Positions Y28–M290 constitute a Protein kinase domain. Residues L34–T42 and K57 contribute to the ATP site. The active-site Proton acceptor is D156. S196 carries the phosphoserine modification. Residues A295–I325 form an autoinhibitory domain region. EF-hand domains lie at E332–N367, L368–L403, D404–G439, and I444–L474. Ca(2+)-binding residues include D345, D347, S349, T351, E356, D381, D383, N385, T387, E392, D417, D419, D421, H423, E428, D452, D454, D456, K458, and E463.

Belongs to the protein kinase superfamily. Ser/Thr protein kinase family. CDPK subfamily.

Its subcellular location is the membrane. It carries out the reaction L-seryl-[protein] + ATP = O-phospho-L-seryl-[protein] + ADP + H(+). The enzyme catalyses L-threonyl-[protein] + ATP = O-phospho-L-threonyl-[protein] + ADP + H(+). With respect to regulation, activated by calcium. Autophosphorylation may play an important role in the regulation of the kinase activity. Its function is as follows. May play a role in signal transduction pathways that involve calcium as a second messenger. The sequence is that of Calcium-dependent protein kinase 31 (CPK31) from Arabidopsis thaliana (Mouse-ear cress).